Consider the following 438-residue polypeptide: Glutamate-1-semialdehyde 2,1-aminomutase (438 aa).

Residue Lys278 is modified to N6-(pyridoxal phosphate)lysine.

Belongs to the class-III pyridoxal-phosphate-dependent aminotransferase family. HemL subfamily. In terms of assembly, homodimer. Pyridoxal 5'-phosphate is required as a cofactor.

The protein resides in the cytoplasm. It carries out the reaction (S)-4-amino-5-oxopentanoate = 5-aminolevulinate. The protein operates within porphyrin-containing compound metabolism; protoporphyrin-IX biosynthesis; 5-aminolevulinate from L-glutamyl-tRNA(Glu): step 2/2. The polypeptide is Glutamate-1-semialdehyde 2,1-aminomutase (Delftia acidovorans (strain DSM 14801 / SPH-1)).